The primary structure comprises 811 residues: Ent-13-epi-manoyl oxide synthase KSL2, chloroplastic (811 aa).

A chloroplast-targeting transit peptide spans 1-49 (MALPLSTCLLFHPKESRSRRFCFSPASAASLKSGLHSATSAKIASMPTC). Positions 550, 554, 694, and 702 each coordinate Mg(2+). Residues 550-554 (DDFFD) carry the DDXXD motif motif.

This sequence belongs to the terpene synthase family. Requires Mg(2+) as cofactor.

It is found in the plastid. The protein resides in the chloroplast. The enzyme catalyses ent-8alpha-hydroxylabd-13-en-15-yl diphosphate = ent-13-epi-manoyl oxide + diphosphate. It functions in the pathway secondary metabolite biosynthesis; terpenoid biosynthesis. Functionally, involved in diterpenoid biosynthesis. Catalyzes the conversion of ent-8alpha-hydroxylabd-13-en-15-yl diphosphate to ent-13-epi-manoyl oxide. The chain is Ent-13-epi-manoyl oxide synthase KSL2, chloroplastic from Salvia miltiorrhiza (Chinese sage).